Here is a 1057-residue protein sequence, read N- to C-terminus: Carbamoyl phosphate synthase large chain (1057 aa).

The segment at 1-401 (MPKNKDINTI…SLLKAIRSLE (401 aa)) is carboxyphosphate synthetic domain. Residues R129, R169, G175, G176, K208, I210, E215, G241, I242, H243, Q284, and E298 each contribute to the ATP site. An ATP-grasp 1 domain is found at 133-327 (RSLMNELDVP…IAKLAAKIAV (195 aa)). Q284, E298, and N300 together coordinate Mg(2+). The Mn(2+) site is built by Q284, E298, and N300. The segment at 402–546 (YGVHHLGLPN…YGTYERDNES (145 aa)) is oligomerization domain. Positions 547 to 929 (VVTDKEKVIV…ALFKGLTASG (383 aa)) are carbamoyl phosphate synthetic domain. In terms of domain architecture, ATP-grasp 2 spans 671-861 (EALLNKIDVP…MAQLAMRAIL (191 aa)). ATP contacts are provided by R707, R746, L748, E752, G777, V778, H779, S780, Q820, and E832. Residues Q820, E832, and N834 each contribute to the Mg(2+) site. Mn(2+) contacts are provided by Q820, E832, and N834. The 128-residue stretch at 930-1057 (VEVKDHGTVL…ESMSFTMKQM (128 aa)) folds into the MGS-like domain. The interval 930–1057 (VEVKDHGTVL…ESMSFTMKQM (128 aa)) is allosteric domain.

This sequence belongs to the CarB family. Composed of two chains; the small (or glutamine) chain promotes the hydrolysis of glutamine to ammonia, which is used by the large (or ammonia) chain to synthesize carbamoyl phosphate. Tetramer of heterodimers (alpha,beta)4. Requires Mg(2+) as cofactor. Mn(2+) serves as cofactor.

The enzyme catalyses hydrogencarbonate + L-glutamine + 2 ATP + H2O = carbamoyl phosphate + L-glutamate + 2 ADP + phosphate + 2 H(+). It catalyses the reaction hydrogencarbonate + NH4(+) + 2 ATP = carbamoyl phosphate + 2 ADP + phosphate + 2 H(+). Its pathway is amino-acid biosynthesis; L-arginine biosynthesis; carbamoyl phosphate from bicarbonate: step 1/1. It functions in the pathway pyrimidine metabolism; UMP biosynthesis via de novo pathway; (S)-dihydroorotate from bicarbonate: step 1/3. Its function is as follows. Large subunit of the glutamine-dependent carbamoyl phosphate synthetase (CPSase). CPSase catalyzes the formation of carbamoyl phosphate from the ammonia moiety of glutamine, carbonate, and phosphate donated by ATP, constituting the first step of 2 biosynthetic pathways, one leading to arginine and/or urea and the other to pyrimidine nucleotides. The large subunit (synthetase) binds the substrates ammonia (free or transferred from glutamine from the small subunit), hydrogencarbonate and ATP and carries out an ATP-coupled ligase reaction, activating hydrogencarbonate by forming carboxy phosphate which reacts with ammonia to form carbamoyl phosphate. In Staphylococcus carnosus (strain TM300), this protein is Carbamoyl phosphate synthase large chain.